A 181-amino-acid chain; its full sequence is Protein AC41 (181 aa).

Functionally, plays a role in late gene expression. This Autographa californica nuclear polyhedrosis virus (AcMNPV) protein is Protein AC41 (AC41).